The primary structure comprises 500 residues: Na(+)/H(+) antiporter NhaB (500 aa).

12 helical membrane-spanning segments follow: residues 28-50 (FLLLNPLLLWLAGPVTSAWVLVG), 68-88 (GGLLVLEALLLGLATPEALYA), 98-118 (LLLMFMVAGIYFMKDLLLLLF), 121-141 (LLLGVRSKALLSLLFCLLAAL), 145-165 (FLDALTVTAVVISVAVAFFAV), 205-225 (LLMHAAVGTALGGVCTLVGEP), 244-264 (QVAPVSMPVLAAGLLTCVLLE), 311-331 (VLIVGLALHVAEVGLIGLLVI), 350-370 (FQEALPFTALLVVFFAVVAVI), 394-414 (MLFIANGLLSAISDNVFVATI), 449-469 (VATPNGQAAFLFLLTSSIAPL), and 477-497 (MVWMALPYTLVMGGLGWWAVS).

The protein belongs to the NhaB Na(+)/H(+) (TC 2.A.34) antiporter family.

It is found in the cell inner membrane. The enzyme catalyses 2 Na(+)(in) + 3 H(+)(out) = 2 Na(+)(out) + 3 H(+)(in). Na(+)/H(+) antiporter that extrudes sodium in exchange for external protons. This is Na(+)/H(+) antiporter NhaB from Pseudomonas aeruginosa (strain UCBPP-PA14).